A 446-amino-acid polypeptide reads, in one-letter code: Kynurenine 3-monooxygenase (446 aa).

It belongs to the aromatic-ring hydroxylase family. KMO subfamily. FAD serves as cofactor.

The catalysed reaction is L-kynurenine + NADPH + O2 + H(+) = 3-hydroxy-L-kynurenine + NADP(+) + H2O. The protein operates within cofactor biosynthesis; NAD(+) biosynthesis; quinolinate from L-kynurenine: step 1/3. In terms of biological role, catalyzes the hydroxylation of L-kynurenine (L-Kyn) to form 3-hydroxy-L-kynurenine (L-3OHKyn). Required for synthesis of quinolinic acid. This is Kynurenine 3-monooxygenase from Flavobacterium johnsoniae (strain ATCC 17061 / DSM 2064 / JCM 8514 / BCRC 14874 / CCUG 350202 / NBRC 14942 / NCIMB 11054 / UW101) (Cytophaga johnsonae).